The chain runs to 419 residues: Phospho-N-acetylmuramoyl-pentapeptide-transferase (419 aa).

10 consecutive transmembrane segments (helical) span residues 22–42 (YVSF…TAIG), 72–92 (TPTM…LLCA), 94–114 (LNNI…ALGF), 135–155 (IVGQ…SPDV), 210–230 (AAWL…SNGA), 238–258 (GLAA…AYMS), 266–286 (FLNI…AAFI), 303–323 (FMGD…AIII), 327–347 (LLIP…MLQV), and 396–416 (KIVV…IVTL).

Belongs to the glycosyltransferase 4 family. MraY subfamily. Mg(2+) serves as cofactor.

It is found in the cell inner membrane. It carries out the reaction UDP-N-acetyl-alpha-D-muramoyl-L-alanyl-gamma-D-glutamyl-meso-2,6-diaminopimeloyl-D-alanyl-D-alanine + di-trans,octa-cis-undecaprenyl phosphate = di-trans,octa-cis-undecaprenyl diphospho-N-acetyl-alpha-D-muramoyl-L-alanyl-D-glutamyl-meso-2,6-diaminopimeloyl-D-alanyl-D-alanine + UMP. Its pathway is cell wall biogenesis; peptidoglycan biosynthesis. Catalyzes the initial step of the lipid cycle reactions in the biosynthesis of the cell wall peptidoglycan: transfers peptidoglycan precursor phospho-MurNAc-pentapeptide from UDP-MurNAc-pentapeptide onto the lipid carrier undecaprenyl phosphate, yielding undecaprenyl-pyrophosphoryl-MurNAc-pentapeptide, known as lipid I. The chain is Phospho-N-acetylmuramoyl-pentapeptide-transferase from Parabacteroides distasonis (strain ATCC 8503 / DSM 20701 / CIP 104284 / JCM 5825 / NCTC 11152).